The sequence spans 276 residues: 4-chlorobenzoyl coenzyme A dehalogenase-2 (276 aa).

Residue 66–71 participates in substrate binding; sequence AGFDLE. His93 serves as the catalytic Proton acceptor. Gly117 is a substrate binding site. The active-site Nucleophile is Asp148. Arg261 contributes to the substrate binding site.

The protein belongs to the enoyl-CoA hydratase/isomerase family. In terms of assembly, homotetramer.

It catalyses the reaction 4-chlorobenzoyl-CoA + H2O = 4-hydroxybenzoyl-CoA + chloride + H(+). The protein operates within xenobiotic degradation; 4-chlorobenzoate degradation; 4-hydroxybenzoate from 4-chlorobenzoate: step 2/3. In terms of biological role, dehalogenates 4-chlorobenzoyl-CoA, 4-iodobenzoyl-CoA, 4-bromobenzoyl-CoA and, at a slower rate, 4-fluorobenzoyl-CoA. Does not dehalogenate 2-chlorobenzoyl-CoA or 3-chlorobenzoyl-CoA. The protein is 4-chlorobenzoyl coenzyme A dehalogenase-2 of Arthrobacter sp.